A 148-amino-acid chain; its full sequence is MKLDLKILDARMRDYLPKYATTGSAGLDLRACLDAPVTLKPGDTALVPTGLAIHLADPGYAALILPRSGLGHKHGIVLGNLVGLIDSDYQGELMISTWNRGQTEFVLNPFERLAQLVIVPVVQATFNIVGDFAQSDRGAGGFGSTGRH.

Substrate contacts are provided by residues 67 to 69 (RSG), asparagine 80, 84 to 86 (LID), and methionine 94.

Belongs to the dUTPase family. Mg(2+) is required as a cofactor.

It carries out the reaction dUTP + H2O = dUMP + diphosphate + H(+). Its pathway is pyrimidine metabolism; dUMP biosynthesis; dUMP from dCTP (dUTP route): step 2/2. This enzyme is involved in nucleotide metabolism: it produces dUMP, the immediate precursor of thymidine nucleotides and it decreases the intracellular concentration of dUTP so that uracil cannot be incorporated into DNA. This Burkholderia thailandensis (strain ATCC 700388 / DSM 13276 / CCUG 48851 / CIP 106301 / E264) protein is Deoxyuridine 5'-triphosphate nucleotidohydrolase.